The primary structure comprises 265 residues: Mlc titration factor A (265 aa).

4 residues coordinate Zn(2+): histidine 111, histidine 148, histidine 152, and glutamate 211.

This sequence belongs to the MtfA family. In terms of assembly, interacts with Mlc. The cofactor is Zn(2+).

The protein resides in the cytoplasm. Its function is as follows. Involved in the modulation of the activity of the glucose-phosphotransferase system (glucose-PTS). Interacts with the transcriptional repressor Mlc, preventing its interaction with DNA and leading to the modulation of expression of genes regulated by Mlc, including ptsG, which encodes the PTS system glucose-specific EIICB component. Shows zinc-dependent metallopeptidase activity. The chain is Mlc titration factor A from Escherichia coli O8 (strain IAI1).